Here is a 225-residue protein sequence, read N- to C-terminus: Holliday junction branch migration complex subunit RuvA (225 aa).

The segment at 1 to 71 (MISWISGELV…EDSDLLFGFS (71 aa)) is domain I. A domain II region spans residues 72–150 (SKDQKNFFIE…NELKIQEEKS (79 aa)). Positions 151 to 161 (KDEFHIKDNKI) are flexible linker. Residues 161-225 (INKIVSDIEL…LDNDSSNIVR (65 aa)) form a domain III region.

Belongs to the RuvA family. Homotetramer. Forms an RuvA(8)-RuvB(12)-Holliday junction (HJ) complex. HJ DNA is sandwiched between 2 RuvA tetramers; dsDNA enters through RuvA and exits via RuvB. An RuvB hexamer assembles on each DNA strand where it exits the tetramer. Each RuvB hexamer is contacted by two RuvA subunits (via domain III) on 2 adjacent RuvB subunits; this complex drives branch migration. In the full resolvosome a probable DNA-RuvA(4)-RuvB(12)-RuvC(2) complex forms which resolves the HJ.

It localises to the cytoplasm. In terms of biological role, the RuvA-RuvB-RuvC complex processes Holliday junction (HJ) DNA during genetic recombination and DNA repair, while the RuvA-RuvB complex plays an important role in the rescue of blocked DNA replication forks via replication fork reversal (RFR). RuvA specifically binds to HJ cruciform DNA, conferring on it an open structure. The RuvB hexamer acts as an ATP-dependent pump, pulling dsDNA into and through the RuvAB complex. HJ branch migration allows RuvC to scan DNA until it finds its consensus sequence, where it cleaves and resolves the cruciform DNA. The chain is Holliday junction branch migration complex subunit RuvA from Prochlorococcus marinus (strain MIT 9312).